The chain runs to 300 residues: Probable protein phosphatase 2C 2 (300 aa).

A PPM-type phosphatase domain is found at 23–298 (IFAASEMQGW…DNMTTILVYL (276 aa)). Mn(2+)-binding residues include aspartate 57, glycine 58, aspartate 237, and aspartate 289.

The protein belongs to the PP2C family. Mg(2+) serves as cofactor. The cofactor is Mn(2+).

It is found in the membrane. The enzyme catalyses O-phospho-L-seryl-[protein] + H2O = L-seryl-[protein] + phosphate. It carries out the reaction O-phospho-L-threonyl-[protein] + H2O = L-threonyl-[protein] + phosphate. Its function is as follows. Enzyme with a broad specificity. The protein is Probable protein phosphatase 2C 2 of Paramecium tetraurelia.